We begin with the raw amino-acid sequence, 498 residues long: Hexokinase-3 (498 aa).

A helical membrane pass occupies residues 4–24 (VAVAFAAVAVVAACSVAAVMV). Residues 35–494 (RTVVEILKEL…SSIGSALLVA (460 aa)) form the Hexokinase domain. A hexokinase small subdomain region spans residues 90-227 (TGREKGTYYA…GLDMHVAALV (138 aa)). ADP-binding residues include glycine 104 and threonine 105. Residues threonine 193, lysine 194, asparagine 228, and aspartate 229 each contribute to the D-glucose site. The hexokinase large subdomain stretch occupies residues 228 to 483 (NDTVGALSLG…QYVVVKAMED (256 aa)). ADP is bound at residue threonine 252. Residues asparagine 255, glutamate 283, and glutamate 314 each contribute to the D-glucose site. Glycine 448 is a binding site for ADP.

Belongs to the hexokinase family. Expressed in roots, emerging lateral roots, vascular tissues of cotyledons, roots and leaves, root and shoot meristems, anther filaments and funiculi of mature seeds.

The protein localises to the mitochondrion outer membrane. It catalyses the reaction a D-hexose + ATP = a D-hexose 6-phosphate + ADP + H(+). The catalysed reaction is D-fructose + ATP = D-fructose 6-phosphate + ADP + H(+). It carries out the reaction D-glucose + ATP = D-glucose 6-phosphate + ADP + H(+). Its pathway is carbohydrate metabolism; hexose metabolism. It functions in the pathway carbohydrate degradation; glycolysis; D-glyceraldehyde 3-phosphate and glycerone phosphate from D-glucose: step 1/4. In terms of biological role, fructose and glucose phosphorylating enzyme. May be involved in the phosphorylation of glucose during the export from mitochondrion to cytosol. Plays a role in plant growth and development, perhaps by mediating cross-talk between glucose and hormone response pathways. Involved in root hair cell development by mediating certain aspects of cross talk between glucose and ethylene response pathways. The sequence is that of Hexokinase-3 from Arabidopsis thaliana (Mouse-ear cress).